The primary structure comprises 419 residues: L-rhamnose isomerase (419 aa).

Histidine 262, aspartate 294, and aspartate 296 together coordinate Mn(2+).

It belongs to the rhamnose isomerase family. Homotetramer. Mn(2+) is required as a cofactor.

It localises to the cytoplasm. It carries out the reaction L-rhamnopyranose = L-rhamnulose. The protein operates within carbohydrate degradation; L-rhamnose degradation; glycerone phosphate from L-rhamnose: step 1/3. Catalyzes the interconversion of L-rhamnose and L-rhamnulose. This Shigella boydii serotype 4 (strain Sb227) protein is L-rhamnose isomerase.